The chain runs to 398 residues: uncharacterized protein (398 aa).

This is an uncharacterized protein from Bacillus subtilis (strain 168).